Here is a 106-residue protein sequence, read N- to C-terminus: Large ribosomal subunit protein eL42 (106 aa).

It belongs to the eukaryotic ribosomal protein eL42 family.

The chain is Large ribosomal subunit protein eL42 (RPL44) from Debaryomyces hansenii (strain ATCC 36239 / CBS 767 / BCRC 21394 / JCM 1990 / NBRC 0083 / IGC 2968) (Yeast).